The following is a 190-amino-acid chain: Cathelicidin-3 (190 aa).

An N-terminal signal peptide occupies residues 1–29; that stretch reads METQMASPSLGRCSLWLLLLGLLLPSASA. At Gln30 the chain carries Pyrrolidone carboxylic acid. A propeptide spanning residues 30 to 130 is cleaved from the precursor; that stretch reads QALSYREAVL…DLNCNELQSV (101 aa). Intrachain disulfides connect Cys85-Cys96 and Cys107-Cys124. Over residues 133–151 the composition is skewed to basic residues; it reads LRPRRPRLPRPRPRPRPRP. Residues 133-190 are disordered; sequence LRPRRPRLPRPRPRPRPRPRSLPLPRPQPRRIPRPILLPWRPPRPIPRPQPQPIPRWL. A compositionally biased stretch (pro residues) spans 172–190; that stretch reads WRPPRPIPRPQPQPIPRWL.

Belongs to the cathelicidin family.

Its subcellular location is the secreted. Functionally, exerts, in vitro, a potent antimicrobial activity. Probably due to an impairment of the function of the respiratory chain and of energy-dependent activities in the inner membrane of susceptible microorganisms. The sequence is that of Cathelicidin-3 (CATHL3) from Ovis aries (Sheep).